We begin with the raw amino-acid sequence, 314 residues long: UDP-3-O-acyl-N-acetylglucosamine deacetylase (314 aa).

Zn(2+)-binding residues include H82, H239, and D243. H266 serves as the catalytic Proton donor.

This sequence belongs to the LpxC family. Zn(2+) is required as a cofactor.

It carries out the reaction a UDP-3-O-[(3R)-3-hydroxyacyl]-N-acetyl-alpha-D-glucosamine + H2O = a UDP-3-O-[(3R)-3-hydroxyacyl]-alpha-D-glucosamine + acetate. It functions in the pathway glycolipid biosynthesis; lipid IV(A) biosynthesis; lipid IV(A) from (3R)-3-hydroxytetradecanoyl-[acyl-carrier-protein] and UDP-N-acetyl-alpha-D-glucosamine: step 2/6. Functionally, catalyzes the hydrolysis of UDP-3-O-myristoyl-N-acetylglucosamine to form UDP-3-O-myristoylglucosamine and acetate, the committed step in lipid A biosynthesis. The chain is UDP-3-O-acyl-N-acetylglucosamine deacetylase from Myxococcus xanthus (strain DK1622).